Here is a 357-residue protein sequence, read N- to C-terminus: MRVLGIETSCDETSAAVVSGTPEAMTLESCVILSQDVHRLFGGVVPEIASRQHLIGIVPAVAAALQEAQVSLSDIDAVAVTHAPGLVGALLVGTSFAKSLALSYDKPLVPVHHLEGHLFATLLEHPDAAPPFTALLVSGGHTLLLDVPAWGEYRLLGQTRDDAVGEAFDKVAKLLGLPYPGGRPIEQLAATAEAPVHKHPHRFARPMLRKSSTPADEDYYDCSFSGLKTAVLYAVRDAERTGTLDDARASIARGFQDAVIDTLVEKVVRAARQHRRSRVVLGGGVACNQALQAAMRNAMEQRKGHVFAPSPRLATDNAAMIAAAGIFRLQRGEFAAPDMTATASLPIPGMIVLSSAR.

Fe cation-binding residues include histidine 113 and histidine 117. Substrate contacts are provided by residues 136–140 (LVSGG), aspartate 169, glycine 182, and asparagine 288. Aspartate 316 contributes to the Fe cation binding site.

This sequence belongs to the KAE1 / TsaD family. It depends on Fe(2+) as a cofactor.

Its subcellular location is the cytoplasm. It catalyses the reaction L-threonylcarbamoyladenylate + adenosine(37) in tRNA = N(6)-L-threonylcarbamoyladenosine(37) in tRNA + AMP + H(+). Its function is as follows. Required for the formation of a threonylcarbamoyl group on adenosine at position 37 (t(6)A37) in tRNAs that read codons beginning with adenine. Is involved in the transfer of the threonylcarbamoyl moiety of threonylcarbamoyl-AMP (TC-AMP) to the N6 group of A37, together with TsaE and TsaB. TsaD likely plays a direct catalytic role in this reaction. The chain is tRNA N6-adenosine threonylcarbamoyltransferase from Gemmatimonas aurantiaca (strain DSM 14586 / JCM 11422 / NBRC 100505 / T-27).